The sequence spans 178 residues: Alkyl hydroperoxide reductase AhpD (178 aa).

The active-site Proton donor is the Cys130. A disulfide bridge connects residues Cys130 and Cys133. The active-site Cysteine sulfenic acid (-SOH) intermediate is Cys133.

Belongs to the AhpD family. As to quaternary structure, homotrimer.

It catalyses the reaction N(6)-[(R)-dihydrolipoyl]-L-lysyl-[lipoyl-carrier protein] + a hydroperoxide = N(6)-[(R)-lipoyl]-L-lysyl-[lipoyl-carrier protein] + an alcohol + H2O. Antioxidant protein with alkyl hydroperoxidase activity. Required for the reduction of the AhpC active site cysteine residues and for the regeneration of the AhpC enzyme activity. This chain is Alkyl hydroperoxide reductase AhpD, found in Mycobacterium ulcerans (strain Agy99).